Reading from the N-terminus, the 215-residue chain is MOB kinase activator-like 1A (215 aa).

A disordered region spans residues 1 to 29 (MSLFGLGSRNQKTFRPKKSAPTGSKGAQL). Residues C80, C85, H162, and H167 each contribute to the Zn(2+) site.

The protein belongs to the MOB1/phocein family. Isoform 1 is constitutively expressed. Isoform 2 is specifically expressed in flowers bud during sporogenesis and gametogenesis.

The protein localises to the cytoplasm. The protein resides in the cytoskeleton. It is found in the phragmoplast. The chain is MOB kinase activator-like 1A from Medicago sativa subsp. falcata (Sickle medic).